A 788-amino-acid polypeptide reads, in one-letter code: Probable potassium transporter 9 (788 aa).

The Cytoplasmic segment spans residues Met1 to Leu21. A helical transmembrane segment spans residues Leu22 to Val42. Residues Tyr43–Glu59 lie on the Extracellular side of the membrane. A helical transmembrane segment spans residues Ile60–Val80. Over Ser81–Leu151 the chain is Cytoplasmic. The chain crosses the membrane as a helical span at residues Leu152 to Ile172. The Extracellular segment spans residues Ser173–Glu191. The chain crosses the membrane as a helical span at residues Tyr192–Gly212. Residues Thr213–Arg215 are Cytoplasmic-facing. A helical transmembrane segment spans residues Val216 to Leu236. Residues Tyr237–Lys264 lie on the Extracellular side of the membrane. A helical transmembrane segment spans residues Ser265–Ala285. The Cytoplasmic portion of the chain corresponds to Asp286–Tyr292. A helical transmembrane segment spans residues Ser293–Gly313. At Gln314–Pro343 the chain is on the extracellular side. A glycan (N-linked (GlcNAc...) asparagine) is linked at Asn325. Residues Val344–Phe364 traverse the membrane as a helical segment. The Cytoplasmic segment spans residues Ser365–Gln391. Residues Ile392 to Phe412 form a helical membrane-spanning segment. Topologically, residues Arg413 to Ser422 are extracellular. N-linked (GlcNAc...) asparagine glycosylation is present at Asn420. Residues Gly423–Leu443 form a helical membrane-spanning segment. At Cys444–Leu451 the chain is on the cytoplasmic side. Residues Ala452–Ile472 traverse the membrane as a helical segment. At Lys473–Glu476 the chain is on the extracellular side. A helical transmembrane segment spans residues Gly477 to His497. Residues Thr498–Leu788 lie on the Cytoplasmic side of the membrane.

Belongs to the HAK/KUP transporter (TC 2.A.72.3) family.

It localises to the membrane. Functionally, high-affinity potassium transporter. This chain is Probable potassium transporter 9 (HAK9), found in Oryza sativa subsp. japonica (Rice).